Here is a 130-residue protein sequence, read N- to C-terminus: Organ-specific protein P4 (130 aa).

2 repeat units span residues 60 to 85 (HAKE…DNEI) and 86 to 111 (HANE…DNEI). The 2 X 26 AA tandem repeats stretch occupies residues 60–111 (HAKENKGAIGEFEPCPNASAYGDNEIHANENKGAIGEFETRPNGSAYGDNEI). The segment at 79–130 (AYGDNEIHANENKGAIGEFETRPNGSAYGDNEIGAEFTDDFEPRPSMTKYNA) is disordered.

It to organ specific protein S2. Expressed in pods.

This Pisum sativum (Garden pea) protein is Organ-specific protein P4.